Consider the following 338-residue polypeptide: Uroporphyrinogen decarboxylase (338 aa).

Residues 27-31, Asp-77, Tyr-151, Ser-203, and His-317 contribute to the substrate site; that span reads RQAGR.

The protein belongs to the uroporphyrinogen decarboxylase family. Homodimer.

It localises to the cytoplasm. It catalyses the reaction uroporphyrinogen III + 4 H(+) = coproporphyrinogen III + 4 CO2. The protein operates within porphyrin-containing compound metabolism; protoporphyrin-IX biosynthesis; coproporphyrinogen-III from 5-aminolevulinate: step 4/4. Functionally, catalyzes the decarboxylation of four acetate groups of uroporphyrinogen-III to yield coproporphyrinogen-III. The chain is Uroporphyrinogen decarboxylase from Wolbachia pipientis wMel.